The sequence spans 561 residues: Excitatory amino acid transporter 4 (561 aa).

The Cytoplasmic segment spans residues 1-52; that stretch reads MSSHGNSLFLRESGAGGGCLQGLQDSLQQRALRTRLRLQTMTREHVRRFLRR. Ser2 is subject to Phosphoserine. The next 3 membrane-spanning stretches (helical) occupy residues 53–73, 96–116, and 130–150; these read NAFI…AFAL, MLQM…MASL, and VYYM…VTII. 3 N-linked (GlcNAc...) asparagine glycosylation sites follow: Asn213, Asn229, and Asn236. 3 helical membrane passes run 259-282, 292-319, and 341-362; these read SANG…IGGM, FFDS…LFLI, and LTVI…YFLV. Residues 368 to 398 constitute an intramembrane region (discontinuously helical); sequence FPFIGGMLQALITAMGTSSSSATLPITFRCL. 385–387 lines the L-aspartate pocket; sequence SSS. A helical membrane pass occupies residues 408–434; the sequence is ITRFVLPVGATVNMDGTALYEALAAIF. Gly416, Thr418, and Asn420 together coordinate Na(+). L-aspartate is bound by residues Thr424, 465-469, Asp498, and Asn505; that span reads IPQAG. Positions 448–481 form an intramembrane region, discontinuously helical; sequence ITTISITATAASVGAAGIPQAGLVTMVIVLTSVG. A helical membrane pass occupies residues 495-516; it reads WFLDRLRTMTNVLGDSIGAAVI. The Na(+) site is built by Asn505 and Asp509.

The protein belongs to the dicarboxylate/amino acid:cation symporter (DAACS) (TC 2.A.23) family. SLC1A6 subfamily. In terms of assembly, homotrimer. Brain specific.

It localises to the cell membrane. It catalyses the reaction K(+)(in) + L-glutamate(out) + 3 Na(+)(out) + H(+)(out) = K(+)(out) + L-glutamate(in) + 3 Na(+)(in) + H(+)(in). The enzyme catalyses K(+)(in) + L-aspartate(out) + 3 Na(+)(out) + H(+)(out) = K(+)(out) + L-aspartate(in) + 3 Na(+)(in) + H(+)(in). It carries out the reaction D-aspartate(out) + K(+)(in) + 3 Na(+)(out) + H(+)(out) = D-aspartate(in) + K(+)(out) + 3 Na(+)(in) + H(+)(in). Sodium-dependent, high-affinity amino acid transporter that mediates the uptake of L-glutamate and also L-aspartate and D-aspartate. Functions as a symporter that transports one amino acid molecule together with two or three Na(+) ions and one proton, in parallel with the counter-transport of one K(+) ion. Mediates Cl(-) flux that is not coupled to amino acid transport; this avoids the accumulation of negative charges due to aspartate and Na(+) symport. Plays a redundant role in the rapid removal of released glutamate from the synaptic cleft, which is essential for terminating the postsynaptic action of glutamate. The chain is Excitatory amino acid transporter 4 (Slc1a6) from Mus musculus (Mouse).